A 205-amino-acid chain; its full sequence is Dephospho-CoA kinase (205 aa).

The DPCK domain occupies 13–205 (RIGLTGGIAS…KWINTIREIL (193 aa)). 21-26 (ASGKST) provides a ligand contact to ATP.

The protein belongs to the CoaE family.

The protein resides in the cytoplasm. It carries out the reaction 3'-dephospho-CoA + ATP = ADP + CoA + H(+). The protein operates within cofactor biosynthesis; coenzyme A biosynthesis; CoA from (R)-pantothenate: step 5/5. Its function is as follows. Catalyzes the phosphorylation of the 3'-hydroxyl group of dephosphocoenzyme A to form coenzyme A. The protein is Dephospho-CoA kinase of Prochlorococcus marinus (strain MIT 9312).